The primary structure comprises 715 residues: Serrate RNA effector molecule homolog (715 aa).

Disordered regions lie at residues 1–87 (MDSD…YSGP), 223–259 (ENKD…TDKA), and 629–715 (EPKH…DDIP). Basic and acidic residues-rich tracts occupy residues 7-25 (GDRR…DSYR), 37-57 (YDNK…SRGD), and 223-242 (ENKD…VKEE). Acidic residues predominate over residues 243–256 (PNEEQEEGAIDDET). Over residues 629–659 (EPKHMPHMSRDDHRGGGGDRGYGRERDDDRG) the composition is skewed to basic and acidic residues.

Belongs to the ARS2 family.

It localises to the nucleus. Functionally, acts as a mediator between the cap-binding complex (CBC) and the primary microRNAs (miRNAs) processing machinery. Contributes to the stability and delivery of capped primary miRNA transcripts to the primary miRNA processing complex, thereby playing a role in RNA-mediated gene silencing (RNAi) by miRNAs. This Caenorhabditis briggsae protein is Serrate RNA effector molecule homolog.